The chain runs to 176 residues: Nutrient stress-induced DNA-binding protein (176 aa).

The protein belongs to the Dps family. Hexamer.

Functionally, involved in protection of chromosomal DNA from damage under nutrient-limited and oxidative stress conditions. Binds heme. The protein is Nutrient stress-induced DNA-binding protein (dpsA) of Synechococcus sp. (strain ATCC 27144 / PCC 6301 / SAUG 1402/1) (Anacystis nidulans).